The sequence spans 308 residues: 1D-myo-inositol 2-acetamido-2-deoxy-alpha-D-glucopyranoside deacetylase (308 aa).

3 residues coordinate Zn(2+): histidine 13, aspartate 16, and histidine 147.

The protein belongs to the MshB deacetylase family. Zn(2+) serves as cofactor.

The catalysed reaction is 1D-myo-inositol 2-acetamido-2-deoxy-alpha-D-glucopyranoside + H2O = 1D-myo-inositol 2-amino-2-deoxy-alpha-D-glucopyranoside + acetate. Functionally, catalyzes the deacetylation of 1D-myo-inositol 2-acetamido-2-deoxy-alpha-D-glucopyranoside (GlcNAc-Ins) in the mycothiol biosynthesis pathway. The chain is 1D-myo-inositol 2-acetamido-2-deoxy-alpha-D-glucopyranoside deacetylase from Mycobacterium leprae (strain Br4923).